Consider the following 545-residue polypeptide: Probable sucrose-6-phosphate hydrolase (545 aa).

Substrate is bound by residues 107–110 (LLND), Q126, 169–170 (FS), 230–231 (RD), and E285. D110 is a catalytic residue.

The protein belongs to the glycosyl hydrolase 32 family.

It is found in the cytoplasm. It carries out the reaction Hydrolysis of terminal non-reducing beta-D-fructofuranoside residues in beta-D-fructofuranosides.. It functions in the pathway glycan biosynthesis; sucrose metabolism. In terms of biological role, enables the bacterium to metabolize sucrose as a sole carbon source. In Psychromonas ingrahamii (strain DSM 17664 / CCUG 51855 / 37), this protein is Probable sucrose-6-phosphate hydrolase.